A 395-amino-acid polypeptide reads, in one-letter code: Tryptophan synthase beta chain (395 aa).

Position 89 is an N6-(pyridoxal phosphate)lysine (Lys-89).

Belongs to the TrpB family. Tetramer of two alpha and two beta chains. Pyridoxal 5'-phosphate is required as a cofactor.

The enzyme catalyses (1S,2R)-1-C-(indol-3-yl)glycerol 3-phosphate + L-serine = D-glyceraldehyde 3-phosphate + L-tryptophan + H2O. It functions in the pathway amino-acid biosynthesis; L-tryptophan biosynthesis; L-tryptophan from chorismate: step 5/5. Functionally, the beta subunit is responsible for the synthesis of L-tryptophan from indole and L-serine. This is Tryptophan synthase beta chain from Fusobacterium nucleatum subsp. nucleatum (strain ATCC 25586 / DSM 15643 / BCRC 10681 / CIP 101130 / JCM 8532 / KCTC 2640 / LMG 13131 / VPI 4355).